The primary structure comprises 325 residues: Interferon regulatory factor 1 (325 aa).

A DNA-binding region (IRF tryptophan pentad repeat) is located at residues 5-113 (RMRMRPWLEM…SAVRVYRMLP (109 aa)). Lys78 carries the N6-acetyllysine modification. The segment at 92–165 (EEVKDQSRNK…TLPDDHSSYT (74 aa)) is disordered. The segment covering 141-157 (GDSSPDTFSDGLSSSTL) has biased composition (polar residues). Residues Lys275 and Lys299 each participate in a glycyl lysine isopeptide (Lys-Gly) (interchain with G-Cter in SUMO) cross-link.

It belongs to the IRF family. Monomer. Homodimer. Interacts with EP300. Interacts with MYD88. Interacts with PIAS3. Interacts with SPOP. In terms of processing, phosphorylated by CK2 and this positively regulates its activity. Post-translationally, sumoylation represses the transcriptional activity and displays enhanced resistance to protein degradation. Sumoylated by UBE2I/UBC9 and SUMO1. Inactivates the tumor suppressor activity. Elevated levels in tumor cells. Major site is Lys-275. Sumoylation is enhanced by PIAS3. Desumoylated by SENP1 in tumor cells and appears to compete with ubiquitination on C-terminal sites. Ubiquitinated in a SPOP-depedent manner. Appears to compete with sumoylation on C-terminal sites.

It localises to the nucleus. Its subcellular location is the cytoplasm. Activated by MYD88. In terms of biological role, transcriptional regulator which displays a remarkable functional diversity in the regulation of cellular responses. Regulates transcription of IFN and IFN-inducible genes, host response to viral and bacterial infections, regulation of many genes expressed during hematopoiesis, inflammation, immune responses and cell proliferation and differentiation, regulation of the cell cycle and induction of growth arrest and programmed cell death following DNA damage. Stimulates both innate and acquired immune responses through the activation of specific target genes and can act as a transcriptional activator and repressor regulating target genes by binding to an interferon-stimulated response element (ISRE) in their promoters. Has an essentail role in IFNG-dependent immunity to mycobacteria. Competes with the transcriptional repressor ZBED2 for binding to a common consensus sequence in gene promoters. Its target genes for transcriptional activation activity include: genes involved in anti-viral response, such as IFN-alpha/beta, RIGI, TNFSF10/TRAIL, ZBP1, OAS1/2, PIAS1/GBP, EIF2AK2/PKR and RSAD2/viperin; antibacterial response, such as GBP2, GBP5 and NOS2/INOS; anti-proliferative response, such as p53/TP53, LOX and CDKN1A; apoptosis, such as BBC3/PUMA, CASP1, CASP7 and CASP8; immune response, such as IL7, IL12A/B and IL15, PTGS2/COX2 and CYBB; DNA damage responses and DNA repair, such as POLQ/POLH; MHC class I expression, such as TAP1, PSMB9/LMP2, PSME1/PA28A, PSME2/PA28B and B2M and MHC class II expression, such as CIITA; metabolic enzymes, such as ACOD1/IRG1. Represses genes involved in anti-proliferative response, such as BIRC5/survivin, CCNB1, CCNE1, CDK1, CDK2 and CDK4 and in immune response, such as FOXP3, IL4, ANXA2 and TLR4. Stimulates p53/TP53-dependent transcription through enhanced recruitment of EP300 leading to increased acetylation of p53/TP53. Plays an important role in immune response directly affecting NK maturation and activity, macrophage production of IL12, Th1 development and maturation of CD8+ T-cells. Also implicated in the differentiation and maturation of dendritic cells and in the suppression of regulatory T (Treg) cells development. Acts as a tumor suppressor and plays a role not only in antagonism of tumor cell growth but also in stimulating an immune response against tumor cells. The sequence is that of Interferon regulatory factor 1 (IRF1) from Homo sapiens (Human).